We begin with the raw amino-acid sequence, 893 residues long: Probable disease resistance protein At1g62630 (893 aa).

The stretch at Gly-24–Glu-68 forms a coiled coil. In terms of domain architecture, NB-ARC spans Thr-136–Gly-440. Residue Gly-179–Thr-186 participates in ATP binding. LRR repeat units follow at residues Val-516–Met-537, Glu-538–Lys-559, Lys-571–Leu-593, Ser-595–Lys-617, Lys-618–His-640, and Asn-641–Glu-663.

Belongs to the disease resistance NB-LRR family.

Functionally, probable disease resistance protein. This is Probable disease resistance protein At1g62630 from Arabidopsis thaliana (Mouse-ear cress).